The sequence spans 460 residues: NADH-ubiquinone oxidoreductase chain 4 (460 aa).

13 helical membrane passes run 20–42 (AKWLWTTSIAQSLVIALASLSWL), 61–81 (PLSTPLLVLTCWLLPLMVLAS), 94–113 (RTYISLLVSLQMFLILAFGA), 117–139 (IMFYIMFEATLLPTLIIITRWGN), 148–168 (TYFLFYTLAGSLPLLVALLLL), 195–215 (LWWAACLLAFLVKMPVYGVHL), 225–245 (PIAGSMILAAVLLKLGGYGMM), 258–278 (LAYPFIVLALWGIIMTGSICL), 285–304 (SLIAYSSVGHMGLVAGGILI), 308–330 (WGFTGAIILMIAHGLASSALFCL), 351–371 (MILPLMTTWWFVASLANLALP), 394–414 (LLLTGLGTLITASYSLYLFLM), and 436–456 (LLITLHLIPIILLILKPELMW).

Belongs to the complex I subunit 4 family.

Its subcellular location is the mitochondrion membrane. The enzyme catalyses a ubiquinone + NADH + 5 H(+)(in) = a ubiquinol + NAD(+) + 4 H(+)(out). Its function is as follows. Core subunit of the mitochondrial membrane respiratory chain NADH dehydrogenase (Complex I) that is believed to belong to the minimal assembly required for catalysis. Complex I functions in the transfer of electrons from NADH to the respiratory chain. The immediate electron acceptor for the enzyme is believed to be ubiquinone. This is NADH-ubiquinone oxidoreductase chain 4 (MT-ND4) from Salmo salar (Atlantic salmon).